Reading from the N-terminus, the 300-residue chain is 7-methylguanosine phosphate-specific 5'-nucleotidase (300 aa).

Asp41 functions as the Nucleophile in the catalytic mechanism. Asp41 and Asp43 together coordinate Mg(2+). Residue Asp43 is the Proton donor of the active site. Glu88 provides a ligand contact to CMP. Glu88 is a binding site for N(7)-methyl-GMP. Substrate is bound by residues 156–157 and Lys205; that span reads SA. Asp230 contributes to the Mg(2+) binding site. Lys256 carries the post-translational modification N6-acetyllysine.

Belongs to the pyrimidine 5'-nucleotidase family. In terms of assembly, monomer.

It localises to the cytoplasm. It catalyses the reaction N(7)-methyl-GMP + H2O = N(7)-methylguanosine + phosphate. The enzyme catalyses CMP + H2O = cytidine + phosphate. The catalysed reaction is a ribonucleoside 5'-phosphate + H2O = a ribonucleoside + phosphate. Specifically hydrolyzes 7-methylguanosine monophosphate (m(7)GMP) to 7-methylguanosine and inorganic phosphate. The specific activity for m(7)GMP may protect cells against undesired salvage of m(7)GMP and its incorporation into nucleic acids. Also has weak activity for CMP. UMP and purine nucleotides are poor substrates. In Homo sapiens (Human), this protein is 7-methylguanosine phosphate-specific 5'-nucleotidase (NT5C3B).